The following is a 316-amino-acid chain: MKALWAVLVVTLLAGCLAEGDPELEPEVTDQLGWQTNQPWEQALGRFWDYLRWVQTLSDQVQQELQTSQVTQELTVLMEDTMTELKAYKKELEEQMGPMAEETRARLAKEVQAAQSRLGADMEDLRNRLGLYRNEVQTMLGQSTEELRARLTTHLRKLRKRLMRDAEDLQKRLAVYKAGAREGAERGVGAIRERLGPLVEQGRQRTANLGAGAAQPLRERAQALGARIRGRLEEVGNQARDRLEEVREQMEEVRAKVEEQAQQMRLQAEIFQTRLKGWFEPLVEDMQRQWANLMEKIQASVATNPIPPSSVPQESQ.

Residues Met1–Ala18 form the signal peptide. Repeat copies occupy residues Val76–Gly97, Pro98–Gly119, Ala120–Gly141, Gln142–Met163, Arg164–Glu185, Arg186–Ala207, Asn208–Arg229, and Gly230–Glu251. The 8 X 22 AA approximate tandem repeats stretch occupies residues Val76–Glu251. Met139 is modified (methionine sulfoxide). Ser143 carries the post-translational modification Phosphoserine. An LDL and other lipoprotein receptors binding region spans residues His154–Arg164. Position 158-161 (Leu158–Arg161) interacts with heparin. The tract at residues Thr206–Met286 is lipid-binding and lipoprotein association. Gly225–Leu232 contributes to the heparin binding site. The segment at Gln262–Gln316 is homooligomerization. The specificity for association with VLDL stretch occupies residues Arg274–Met286.

This sequence belongs to the apolipoprotein A1/A4/E family. Homotetramer. May interact with ABCA1; functionally associated with ABCA1 in the biogenesis of HDLs. May interact with APP/A4 amyloid-beta peptide; the interaction is extremely stable in vitro but its physiological significance is unclear. May interact with MAPT. May interact with MAP2. In the cerebrospinal fluid, interacts with secreted SORL1. Interacts with PMEL; this allows the loading of PMEL luminal fragment on ILVs to induce fibril nucleation. APOE exists as multiple glycosylated and sialylated glycoforms within cells and in plasma. The extent of glycosylation and sialylation are tissue and context specific. In terms of processing, glycated in plasma VLDL. Post-translationally, phosphorylated by FAM20C in the extracellular medium.

It localises to the secreted. Its subcellular location is the extracellular space. The protein resides in the extracellular matrix. It is found in the extracellular vesicle. The protein localises to the endosome. It localises to the multivesicular body. Functionally, APOE is an apolipoprotein, a protein associating with lipid particles, that mainly functions in lipoprotein-mediated lipid transport between organs via the plasma and interstitial fluids. APOE is a core component of plasma lipoproteins and is involved in their production, conversion and clearance. Apolipoproteins are amphipathic molecules that interact both with lipids of the lipoprotein particle core and the aqueous environment of the plasma. As such, APOE associates with chylomicrons, chylomicron remnants, very low density lipoproteins (VLDL) and intermediate density lipoproteins (IDL) but shows a preferential binding to high-density lipoproteins (HDL). It also binds a wide range of cellular receptors including the LDL receptor/LDLR, the LDL receptor-related proteins LRP1, LRP2 and LRP8 and the very low-density lipoprotein receptor/VLDLR that mediate the cellular uptake of the APOE-containing lipoprotein particles. Finally, APOE also has a heparin-binding activity and binds heparan-sulfate proteoglycans on the surface of cells, a property that supports the capture and the receptor-mediated uptake of APOE-containing lipoproteins by cells. A main function of APOE is to mediate lipoprotein clearance through the uptake of chylomicrons, VLDLs, and HDLs by hepatocytes. APOE is also involved in the biosynthesis by the liver of VLDLs as well as their uptake by peripheral tissues ensuring the delivery of triglycerides and energy storage in muscle, heart and adipose tissues. By participating in the lipoprotein-mediated distribution of lipids among tissues, APOE plays a critical role in plasma and tissues lipid homeostasis. APOE is also involved in two steps of reverse cholesterol transport, the HDLs-mediated transport of cholesterol from peripheral tissues to the liver, and thereby plays an important role in cholesterol homeostasis. First, it is functionally associated with ABCA1 in the biogenesis of HDLs in tissues. Second, it is enriched in circulating HDLs and mediates their uptake by hepatocytes. APOE also plays an important role in lipid transport in the central nervous system, regulating neuron survival and sprouting. This is Apolipoprotein E (APOE) from Microtus ochrogaster (Prairie vole).